We begin with the raw amino-acid sequence, 395 residues long: Long-chain-alcohol dehydrogenase 1 (395 aa).

Residues 98–102 (GSALD) and 141–144 (TTSG) each bind NAD(+).

Belongs to the iron-containing alcohol dehydrogenase family. As to quaternary structure, homooctamer.

It carries out the reaction glycerol + NAD(+) = dihydroxyacetone + NADH + H(+). The enzyme catalyses a long-chain primary fatty alcohol + 2 NAD(+) + H2O = a long-chain fatty acid + 2 NADH + 3 H(+). Its function is as follows. Long-chain alkyl alcohol dehydrogenase that can oxidize a broad range of alkyl alcohols from ethanol to 1-triacontanol (C2 to C30) as well as 1,3-propanediol and acetaldehyde. The best substrate is ethanol. Also oxidizes glycerol. This is Long-chain-alcohol dehydrogenase 1 (adh1) from Geobacillus thermodenitrificans (strain NG80-2).